The sequence spans 159 residues: Growth arrest and DNA damage-inducible protein GADD45 gamma (159 aa).

Residues 43–86 (VYESAKVLNVDPDNVTFCVLAAGEEDEGDIALQIHFTLIQAFCC) are homodimerization.

The protein belongs to the GADD45 family. As to quaternary structure, undergoes concentration-dependent homodimerization, which is required for growth inhibititory activity and enhances interaction with PCNA. Interacts with GADD45GIP1. Interacts with PCNA.

In terms of biological role, involved in the regulation of growth and apoptosis. Mediates activation of stress-responsive MTK1/MEKK4 MAPKKK. This Homo sapiens (Human) protein is Growth arrest and DNA damage-inducible protein GADD45 gamma (GADD45G).